Consider the following 400-residue polypeptide: CRAL-TRIO domain-containing protein C34C12.6 (400 aa).

The region spanning 87-270 (ELPSIAPFLQ…EYGGEFVNTV (184 aa)) is the CRAL-TRIO domain. In terms of domain architecture, GOLD spans 304-399 (PKSSHKDVSP…TLKLEYTVAI (96 aa)).

The polypeptide is CRAL-TRIO domain-containing protein C34C12.6 (Caenorhabditis elegans).